Reading from the N-terminus, the 209-residue chain is NAD(P)H-quinone oxidoreductase subunit K 2 (209 aa).

4 residues coordinate [4Fe-4S] cluster: Cys-53, Cys-54, Cys-118, and Cys-149.

This sequence belongs to the complex I 20 kDa subunit family. In terms of assembly, NDH-1 can be composed of about 15 different subunits; different subcomplexes with different compositions have been identified which probably have different functions. [4Fe-4S] cluster serves as cofactor.

The protein localises to the cellular thylakoid membrane. The catalysed reaction is a plastoquinone + NADH + (n+1) H(+)(in) = a plastoquinol + NAD(+) + n H(+)(out). It carries out the reaction a plastoquinone + NADPH + (n+1) H(+)(in) = a plastoquinol + NADP(+) + n H(+)(out). NDH-1 shuttles electrons from an unknown electron donor, via FMN and iron-sulfur (Fe-S) centers, to quinones in the respiratory and/or the photosynthetic chain. The immediate electron acceptor for the enzyme in this species is believed to be plastoquinone. Couples the redox reaction to proton translocation, and thus conserves the redox energy in a proton gradient. Cyanobacterial NDH-1 also plays a role in inorganic carbon-concentration. This is NAD(P)H-quinone oxidoreductase subunit K 2 from Acaryochloris marina (strain MBIC 11017).